A 113-amino-acid chain; its full sequence is U11-theraphotoxin-Hhn1g (113 aa).

The first 21 residues, 1–21 (MNTVRVTFLLVFVLAVSLGQA), serve as a signal peptide directing secretion. The propeptide occupies 22–74 (DKDENRMEMQEKTEQGKSYLDFAENLLLQKLEELEAKLLEEDSEESRNSRQKR). Residues 61-83 (EEDSEESRNSRQKRCIGEGVPCD) are disordered. 3 disulfides stabilise this stretch: Cys75-Cys90, Cys82-Cys95, and Cys89-Cys110.

This sequence belongs to the neurotoxin 14 (magi-1) family. 01 (HNTX-16) subfamily. Expressed by the venom gland.

It is found in the secreted. Functionally, probable ion channel inhibitor. The chain is U11-theraphotoxin-Hhn1g from Cyriopagopus hainanus (Chinese bird spider).